The following is a 122-amino-acid chain: MSDKPISKSRRDAVKVMLGTAAAIPMINLVGFGTARASAPANAVAADDATAIALKYNQDATKSERVAAARPGLPPEEQHCANCQFMQADAAGATDEWKGCQLFPGKLINVNGWCASWTLKAG.

The N-terminal stretch at 1–37 (MSDKPISKSRRDAVKVMLGTAAAIPMINLVGFGTARA) is a signal peptide. The [4Fe-4S] cluster site is built by cysteine 80, cysteine 83, cysteine 100, and cysteine 114.

The protein belongs to the high-potential iron-sulfur protein (HiPIP) family. As to quaternary structure, homodimer.

The protein resides in the periplasm. Functionally, specific class of high-redox-potential 4Fe-4S ferredoxins. Functions in anaerobic electron transport in most purple and in some other photosynthetic bacteria and in at least one genus (Paracoccus) of halophilic, denitrifying bacteria. In Allochromatium vinosum (strain ATCC 17899 / DSM 180 / NBRC 103801 / NCIMB 10441 / D) (Chromatium vinosum), this protein is High-potential iron-sulfur protein (hip).